The sequence spans 286 residues: 4-diphosphocytidyl-2-C-methyl-D-erythritol kinase (286 aa).

K11 is an active-site residue. 93 to 103 (PFGAGLGGGSS) provides a ligand contact to ATP. The active site involves D135.

This sequence belongs to the GHMP kinase family. IspE subfamily.

The catalysed reaction is 4-CDP-2-C-methyl-D-erythritol + ATP = 4-CDP-2-C-methyl-D-erythritol 2-phosphate + ADP + H(+). The protein operates within isoprenoid biosynthesis; isopentenyl diphosphate biosynthesis via DXP pathway; isopentenyl diphosphate from 1-deoxy-D-xylulose 5-phosphate: step 3/6. In terms of biological role, catalyzes the phosphorylation of the position 2 hydroxy group of 4-diphosphocytidyl-2C-methyl-D-erythritol. This is 4-diphosphocytidyl-2-C-methyl-D-erythritol kinase from Chlorobium phaeobacteroides (strain BS1).